The primary structure comprises 366 residues: MSHEKSFLVSGDSYPPPNPGYPGGPQPSMAPYPGAPYPQAPFQPSPYGQPGYPQGPSPYPQGGYPQGPYPPGGYPQGPYPPGGYPQGPYPPGGYPQGPYPQSPFPPNPYGQPQAFPAQDPGSPHHGNYHEEGPPSYYDNQDFPATNWDDKSIRQAFIRKVFLVLTLQLSVTLSTVAVFTFVGEVKGFVRENVWTYYVSYAIFFVSLIVLSCCGDFRRKHPWNLVALSILTVSLSYMVGMIASFYNTEAVIMAVGITTTVCFTVVIFSMQTRYDFTSCVGVLLVSVVVLILFAILCIFIRSRVLEIVYASLGALLFTCFLAVDTQLLLGNKQLSLSPEEYVFAALNLYTDIINIFLYILTIIGRAKE.

Residues 1 to 141 are disordered; the sequence is MSHEKSFLVS…GPPSYYDNQD (141 aa). Composition is skewed to pro residues over residues 14–44 and 67–109; these read YPPP…PFQP and GPYP…PNPY. The next 7 helical transmembrane spans lie at 160-180, 192-212, 223-243, 248-268, 278-298, 302-322, and 341-361; these read VFLV…VFTF, VWTY…LSCC, LVAL…IASF, AVIM…IFSM, VGVL…CIFI, VLEI…LAVD, and FAAL…LTII.

It belongs to the BI1 family. LFG subfamily.

The protein localises to the membrane. Its function is as follows. Potential apoptotic regulator. In Bos taurus (Bovine), this protein is Protein lifeguard 1 (GRINA).